Here is a 289-residue protein sequence, read N- to C-terminus: 4-diphosphocytidyl-2-C-methyl-D-erythritol kinase (289 aa).

The active site involves K10. 94–104 (PVAAGLAGGSS) contacts ATP. D136 is an active-site residue.

Belongs to the GHMP kinase family. IspE subfamily.

The enzyme catalyses 4-CDP-2-C-methyl-D-erythritol + ATP = 4-CDP-2-C-methyl-D-erythritol 2-phosphate + ADP + H(+). It functions in the pathway isoprenoid biosynthesis; isopentenyl diphosphate biosynthesis via DXP pathway; isopentenyl diphosphate from 1-deoxy-D-xylulose 5-phosphate: step 3/6. Functionally, catalyzes the phosphorylation of the position 2 hydroxy group of 4-diphosphocytidyl-2C-methyl-D-erythritol. The chain is 4-diphosphocytidyl-2-C-methyl-D-erythritol kinase from Bacillus anthracis (strain CDC 684 / NRRL 3495).